Here is a 44-residue protein sequence, read N- to C-terminus: Photosystem I reaction center subunit IX (44 aa).

The helical transmembrane segment at Y7–I27 threads the bilayer.

The protein belongs to the PsaJ family.

The protein localises to the plastid. It is found in the chloroplast thylakoid membrane. Its function is as follows. May help in the organization of the PsaE and PsaF subunits. The sequence is that of Photosystem I reaction center subunit IX from Cycas taitungensis (Prince sago).